The chain runs to 435 residues: Nuclear hormone receptor family member nhr-14 (435 aa).

The nuclear receptor DNA-binding region spans 17-92 (ADFCVVCGDK…DGMKPEAIQN (76 aa)). 2 consecutive NR C4-type zinc fingers follow at residues 20–40 (CVVC…CNGC) and 56–80 (CRFN…FQKC). The segment at 91 to 126 (QNERDRIGSTKRRKRSGANSENNSDSEGTPSPKIEV) is disordered. Positions 107–119 (GANSENNSDSEGT) are enriched in polar residues. The 225-residue stretch at 131–355 (VSRKLIEMLL…KRDTISPKIE (225 aa)) folds into the NR LBD domain.

Belongs to the nuclear hormone receptor family. As to expression, expressed in intestine and head neurons in young adults.

It is found in the nucleus. Orphan nuclear receptor. Transcriptional repressor of intestinal metal transporter smf-3 and genes of the innate immune response. Inhibits nuclear localization of transcription factor pqm-1; in response to pathogen stress, may facilitate translocation of pqm-1, leading to transcriptional activation of genes involved in innate immunity and iron uptake. The protein is Nuclear hormone receptor family member nhr-14 (nhr-14) of Caenorhabditis elegans.